The sequence spans 357 residues: tRNA N6-adenosine threonylcarbamoyltransferase (357 aa).

Fe cation-binding residues include His-115 and His-119. Substrate contacts are provided by residues 137 to 141 (LASGG), Asp-170, Gly-183, and Asn-281. Residue Asp-309 coordinates Fe cation.

Belongs to the KAE1 / TsaD family. Fe(2+) is required as a cofactor.

The protein localises to the cytoplasm. The catalysed reaction is L-threonylcarbamoyladenylate + adenosine(37) in tRNA = N(6)-L-threonylcarbamoyladenosine(37) in tRNA + AMP + H(+). In terms of biological role, required for the formation of a threonylcarbamoyl group on adenosine at position 37 (t(6)A37) in tRNAs that read codons beginning with adenine. Is involved in the transfer of the threonylcarbamoyl moiety of threonylcarbamoyl-AMP (TC-AMP) to the N6 group of A37, together with TsaE and TsaB. TsaD likely plays a direct catalytic role in this reaction. The polypeptide is tRNA N6-adenosine threonylcarbamoyltransferase (Nitrobacter winogradskyi (strain ATCC 25391 / DSM 10237 / CIP 104748 / NCIMB 11846 / Nb-255)).